The sequence spans 478 residues: Probable L-ascorbate peroxidase 8, chloroplastic (478 aa).

Over residues 1–13 (MAERIAASLLPAA) the composition is skewed to low complexity. Disordered stretches follow at residues 1–31 (MAER…VSAA) and 44–66 (GGLR…RSGR). A chloroplast-targeting transit peptide spans 1-76 (MAERIAASLL…AGAGARAVVR (76 aa)). Pro residues predominate over residues 14 to 26 (SPSPAPSPPPPRP). The active-site Proton acceptor is the His117. The interval 245–276 (AHTLGRSRPDRSGWGKPETKYTKDGPGEPGGQ) is disordered. His246 is a binding site for heme b. K(+) is bound at residue Thr247. Over residues 251–270 (SRPDRSGWGKPETKYTKDGP) the composition is skewed to basic and acidic residues. K(+)-binding residues include Thr279 and Asp286. The segment at 346–417 (AKFDPPEGFS…DNNGAAPQPE (72 aa)) is disordered. Pro residues predominate over residues 369–381 (PAPAPAAAPPPPP). Positions 394 to 406 (PVTVGAAVASSPA) are enriched in low complexity. The chain crosses the membrane as a helical span at residues 458-478 (YFLNIMLLIGGLAFLTSLLGS).

It belongs to the peroxidase family. Ascorbate peroxidase subfamily. As to quaternary structure, interacts with SWEET11/OS8N3. The cofactor is heme b. In terms of tissue distribution, expressed in roots, leaves, stems and flowers. Expressed in leaves, shoots and panicles. Expressed at low levels in roots.

Its subcellular location is the plastid. It is found in the chloroplast thylakoid membrane. The catalysed reaction is L-ascorbate + H2O2 = L-dehydroascorbate + 2 H2O. In terms of biological role, involved in defense response and tolerance to the bacterial pathogen Xanthomonas oryzae pv. oryzae (Xoo). Plays an important role in hydrogen peroxide removal during infection by Xoo. Involved in response to abiotic stress. Plays a role in hydrogen peroxide removal durings salt stress. This chain is Probable L-ascorbate peroxidase 8, chloroplastic, found in Oryza sativa subsp. japonica (Rice).